A 200-amino-acid chain; its full sequence is ATP-dependent Clp protease proteolytic subunit 3 (200 aa).

S101 (nucleophile) is an active-site residue. Residue H126 is part of the active site.

Belongs to the peptidase S14 family. As to quaternary structure, fourteen ClpP subunits assemble into 2 heptameric rings which stack back to back to give a disk-like structure with a central cavity, resembling the structure of eukaryotic proteasomes.

It is found in the cytoplasm. It catalyses the reaction Hydrolysis of proteins to small peptides in the presence of ATP and magnesium. alpha-casein is the usual test substrate. In the absence of ATP, only oligopeptides shorter than five residues are hydrolyzed (such as succinyl-Leu-Tyr-|-NHMec, and Leu-Tyr-Leu-|-Tyr-Trp, in which cleavage of the -Tyr-|-Leu- and -Tyr-|-Trp bonds also occurs).. Cleaves peptides in various proteins in a process that requires ATP hydrolysis. Has a chymotrypsin-like activity. Plays a major role in the degradation of misfolded proteins. In Synechococcus sp. (strain CC9605), this protein is ATP-dependent Clp protease proteolytic subunit 3.